The chain runs to 94 residues: Small ribosomal subunit protein uS19 (94 aa).

The tract at residues 75 to 94 (SHTRTFKGHAGDKKAAGSKR) is disordered. The segment covering 83-94 (HAGDKKAAGSKR) has biased composition (basic and acidic residues).

The protein belongs to the universal ribosomal protein uS19 family.

Protein S19 forms a complex with S13 that binds strongly to the 16S ribosomal RNA. The chain is Small ribosomal subunit protein uS19 from Nitrosomonas europaea (strain ATCC 19718 / CIP 103999 / KCTC 2705 / NBRC 14298).